A 191-amino-acid polypeptide reads, in one-letter code: Iron-sulfur flavoprotein (191 aa).

Positions 47, 50, 53, and 59 each coordinate [4Fe-4S] cluster.

The protein belongs to the SsuE family. Isf subfamily. As to quaternary structure, homodimer. The cofactor is FMN. Requires [4Fe-4S] cluster as cofactor.

Redox-active protein probably involved in electron transport during fermentation of acetate to methane. The polypeptide is Iron-sulfur flavoprotein (isf) (Methanosarcina thermophila).